The primary structure comprises 85 residues: Large ribosomal subunit protein bL27 (85 aa).

A disordered region spans residues 1-20 (MAHKKAGGSTRNGRDSEAKR).

Belongs to the bacterial ribosomal protein bL27 family.

The polypeptide is Large ribosomal subunit protein bL27 (Citrobacter koseri (strain ATCC BAA-895 / CDC 4225-83 / SGSC4696)).